Here is a 389-residue protein sequence, read N- to C-terminus: Arrestin-C (389 aa).

Belongs to the arrestin family. In terms of tissue distribution, retina and pineal gland.

Its function is as follows. May play a role in an as yet undefined retina-specific signal transduction. Could bind to photoactivated-phosphorylated red/green opsins. The chain is Arrestin-C (arr3) from Lithobates pipiens (Northern leopard frog).